The primary structure comprises 436 residues: Serine/threonine-protein kinase STK11 (436 aa).

The residue at position 31 (S31) is a Phosphoserine. An N6-acetyllysine mark is found at K44 and K48. The interval 45–90 (LIGKYLMGDLLGEGSYGKVKEVLDSETLCRRAVKILKKKKLRRIPN) is sufficient for interaction with SIRT1. The region spanning 49–309 (YLMGDLLGEG…IRQIRQHSWF (261 aa)) is the Protein kinase domain. Residues 55-63 (LGEGSYGKV) and K78 each bind ATP. K96 and K97 each carry N6-acetyllysine. D176 (proton acceptor) is an active-site residue. T189 is subject to Phosphothreonine; by autocatalysis. N6-acetyllysine occurs at positions 296 and 311. S325 bears the Phosphoserine mark. Phosphothreonine; by autocatalysis is present on T336. Position 366 is a phosphothreonine; by ATM and autocatalysis (T366). The interval 398–421 (TEPQLSSKVKPEGRPGTANPARKV) is disordered. The residue at position 403 (S403) is a Phosphoserine. K420 is modified (N6-acetyllysine). A lipid anchor (S-palmitoyl cysteine) is attached at C422. At K426 the chain carries N6-acetyllysine. S431 is modified (phosphoserine; by autocatalysis, PKA, PKC/PRKCZ and RPS6KA1). C433 carries the cysteine methyl ester modification. A lipid anchor (S-farnesyl cysteine) is attached at C433. Position 434 is an N6-acetyllysine (K434). Residues 434-436 (KQQ) constitute a propeptide, removed in mature form.

This sequence belongs to the protein kinase superfamily. CAMK Ser/Thr protein kinase family. LKB1 subfamily. Catalytic component of a trimeric complex composed of STK11/LKB1, STRAD (STRADA or STRADB) and CAB39/MO25 (CAB39/MO25alpha or CAB39L/MO25beta): the complex tethers STK11/LKB1 in the cytoplasm and stimulates its catalytic activity. Found in a ternary complex composed of SMAD4, STK11/LKB1 and STK11IP. Interacts with p53/TP53, SMAD4, STK11IP and WDR6. Interacts with NR4A1. Interacts with NISCH; this interaction may increase STK11 activity. Interacts with PTEN, leading to PTEN phosphorylation. Interacts with SIRT1; the interaction deacetylates STK11. Interacts with CDKN1A. Mg(2+) serves as cofactor. It depends on Mn(2+) as a cofactor. Phosphorylated by ATM at Thr-366 following ionizing radiation (IR). Phosphorylation at Ser-431 by RPS6KA1 and/or some PKA is required to inhibit cell growth. Phosphorylation at Ser-431 is also required during neuronal polarization to mediate phosphorylation of BRSK1 and BRSK2. Phosphorylation by PKC/PRKCZ at Ser-399 in isoform 2 promotes metformin (or peroxynitrite)-induced nuclear export of STK11 and activation of AMPK. UV radiation-induced phosphorylation at Thr-366 mediates CDKN1A degradation. Post-translationally, acetylated. Deacetylation at Lys-48 enhances cytoplasmic localization and kinase activity in vitro. As to expression, widely expressed. Predominantly expressed in testis (at protein level). In terms of tissue distribution, expressed in adult brain and liver and absent from tissues derived from postnatal day 7.

The protein resides in the nucleus. Its subcellular location is the cytoplasm. It localises to the membrane. It is found in the mitochondrion. It catalyses the reaction L-seryl-[protein] + ATP = O-phospho-L-seryl-[protein] + ADP + H(+). It carries out the reaction L-threonyl-[protein] + ATP = O-phospho-L-threonyl-[protein] + ADP + H(+). Activated by forming a complex with STRAD (STRADA or STRADB) and CAB39/MO25 (CAB39/MO25alpha or CAB39L/MO25beta): STRADA (or STRADB)-binding promotes a conformational change of STK11/LKB1 in an active conformation, which is stabilized by CAB39/MO25alpha (or CAB39L/MO25beta) interacting with the STK11/LKB1 activation loop. Sequestration in the nucleus by NR4A1 prevents it from phosphorylating and activating cytoplasmic AMPK. Its function is as follows. Tumor suppressor serine/threonine-protein kinase that controls the activity of AMP-activated protein kinase (AMPK) family members, thereby playing a role in various processes such as cell metabolism, cell polarity, apoptosis and DNA damage response. Acts by phosphorylating the T-loop of AMPK family proteins, thus promoting their activity: phosphorylates PRKAA1, PRKAA2, BRSK1, BRSK2, MARK1, MARK2, MARK3, MARK4, NUAK1, NUAK2, SIK1, SIK2, SIK3 and SNRK but not MELK. Also phosphorylates non-AMPK family proteins such as STRADA, PTEN and possibly p53/TP53. Acts as a key upstream regulator of AMPK by mediating phosphorylation and activation of AMPK catalytic subunits PRKAA1 and PRKAA2 and thereby regulates processes including: inhibition of signaling pathways that promote cell growth and proliferation when energy levels are low, glucose homeostasis in liver, activation of autophagy when cells undergo nutrient deprivation, and B-cell differentiation in the germinal center in response to DNA damage. Also acts as a regulator of cellular polarity by remodeling the actin cytoskeleton. Required for cortical neuron polarization by mediating phosphorylation and activation of BRSK1 and BRSK2, leading to axon initiation and specification. Involved in DNA damage response: interacts with p53/TP53 and recruited to the CDKN1A/WAF1 promoter to participate in transcription activation. Able to phosphorylate p53/TP53; the relevance of such result in vivo is however unclear and phosphorylation may be indirect and mediated by downstream STK11/LKB1 kinase NUAK1. Also acts as a mediator of p53/TP53-dependent apoptosis via interaction with p53/TP53: translocates to the mitochondrion during apoptosis and regulates p53/TP53-dependent apoptosis pathways. Regulates UV radiation-induced DNA damage response mediated by CDKN1A. In association with NUAK1, phosphorylates CDKN1A in response to UV radiation and contributes to its degradation which is necessary for optimal DNA repair. Functionally, has a role in spermiogenesis. This Mus musculus (Mouse) protein is Serine/threonine-protein kinase STK11.